A 642-amino-acid polypeptide reads, in one-letter code: G protein-coupled receptor kinase 1 (642 aa).

Residues 1–202 form an N-terminal region; the sequence is MEIENIVANT…LEKRPVDKHT (202 aa). The RGS domain maps to 52 to 188; the sequence is YAFVVEKQPI…AESMYFHRFL (137 aa). In terms of domain architecture, Protein kinase spans 203 to 470; that stretch reads FRLYRVLGKG…AEEIRAHPFF (268 aa). ATP-binding positions include 209 to 217 and K232; that span reads LGKGGFGEV. D328 serves as the catalytic Proton acceptor. The AGC-kinase C-terminal domain maps to 480–545; the sequence is EPVPWKKMEA…GCVSIPWQSE (66 aa). The segment at 612-642 is disordered; the sequence is VEQQQPPKTSTQTPAVRSSRAASASGRTLVI. Positions 614–636 are enriched in low complexity; the sequence is QQQPPKTSTQTPAVRSSRAASAS.

The protein belongs to the protein kinase superfamily. AGC Ser/Thr protein kinase family. GPRK subfamily.

It carries out the reaction [G-protein-coupled receptor] + ATP = [G-protein-coupled receptor]-phosphate + ADP + H(+). Specifically phosphorylates the activated forms of G protein-coupled receptors. In Caenorhabditis elegans, this protein is G protein-coupled receptor kinase 1 (grk-1).